A 481-amino-acid polypeptide reads, in one-letter code: Glutamyl-tRNA(Gln) amidotransferase subunit A (481 aa).

Residues Lys-74 and Ser-149 each act as charge relay system in the active site. Ser-173 acts as the Acyl-ester intermediate in catalysis.

It belongs to the amidase family. GatA subfamily. Heterotrimer of A, B and C subunits.

It catalyses the reaction L-glutamyl-tRNA(Gln) + L-glutamine + ATP + H2O = L-glutaminyl-tRNA(Gln) + L-glutamate + ADP + phosphate + H(+). Its function is as follows. Allows the formation of correctly charged Gln-tRNA(Gln) through the transamidation of misacylated Glu-tRNA(Gln) in organisms which lack glutaminyl-tRNA synthetase. The reaction takes place in the presence of glutamine and ATP through an activated gamma-phospho-Glu-tRNA(Gln). This is Glutamyl-tRNA(Gln) amidotransferase subunit A from Francisella tularensis subsp. mediasiatica (strain FSC147).